The sequence spans 885 residues: Translation initiation factor IF-2 (885 aa).

The interval 1–295 is disordered; sequence MTDNKDDKTI…EKFKRSQMQE (295 aa). Low complexity predominate over residues 63 to 77; sequence PVAAAPAAARPAEQR. The segment covering 78–94 has biased composition (pro residues); the sequence is PMPPQPSGRPAPQPQPH. Positions 130 to 183 are enriched in basic and acidic residues; that stretch reads RDAEEAKRRAEEEVRRRREEEERIAREKEEAARRAAEEAARPAVEAEKVEEKVE. Residues 184–201 show a composition bias toward low complexity; that stretch reads AATPAVAETRPLSERPAP. A tr-type G domain is found at 383–550; the sequence is ARPPIVTIMG…AILLQSEILD (168 aa). A G1 region spans residues 392–399; the sequence is GHVDHGKT. Residue 392-399 coordinates GTP; sequence GHVDHGKT. Positions 417-421 are G2; it reads GITQH. Residues 438-441 form a G3 region; it reads DTPG. Residues 438-442 and 492-495 each bind GTP; these read DTPGH and NKID. Positions 492-495 are G4; it reads NKID. A G5 region spans residues 528–530; the sequence is SAK.

Belongs to the TRAFAC class translation factor GTPase superfamily. Classic translation factor GTPase family. IF-2 subfamily.

It is found in the cytoplasm. In terms of biological role, one of the essential components for the initiation of protein synthesis. Protects formylmethionyl-tRNA from spontaneous hydrolysis and promotes its binding to the 30S ribosomal subunits. Also involved in the hydrolysis of GTP during the formation of the 70S ribosomal complex. In Sinorhizobium medicae (strain WSM419) (Ensifer medicae), this protein is Translation initiation factor IF-2.